Reading from the N-terminus, the 519-residue chain is Na(+)/H(+) exchange regulatory cofactor NHE-RF3 (519 aa).

3 PDZ domains span residues 9–90 (ECKL…LDGD), 134–215 (RLCY…VDKE), and 243–323 (IVEM…VDKE). A phosphoserine mark is found at serine 148, serine 192, serine 250, serine 334, and serine 348. The tract at residues 347–374 (GSVKEAPAPTPTSLEVSSPPDTTEEVDH) is disordered. A compositionally biased stretch (polar residues) spans 357 to 367 (PTSLEVSSPPD). The region spanning 378 to 458 (LCRLAKGENG…NVTLLVCGKK (81 aa)) is the PDZ 4 domain. Threonine 451 bears the Phosphothreonine mark. The disordered stretch occupies residues 473-519 (SLADPPDTPPDSKEGIVVESKHDSHMAKERAHSTASHSSSNSEDTEM). The segment covering 482-504 (PDSKEGIVVESKHDSHMAKERAH) has biased composition (basic and acidic residues). 6 positions are modified to phosphoserine: serine 492, serine 508, serine 510, serine 511, serine 512, and serine 514. A compositionally biased stretch (low complexity) spans 505–519 (STASHSSSNSEDTEM).

Belongs to the NHER family. In terms of assembly, interacts with PDZK1IP1 and ABCC2. Binds to the C-terminal region of SLC26A3. Interacts (via PDZ domains 1 and 3) with SCARB1 (C-terminal domain). Forms a heterodimeric complex with NHERF1. Interacts with AKAP2, BCR, CFTR, SLCO1A1, SLC22A12, SLC22A4, SLC22A5, NHERF2 and SLC17A1. Component of a complex, composed of PDZK1, SYNGAP1, KLHL17 and NMDA receptors. Interacts (via PDZ1 domain) directly with KLHL17; the interaction is important for integrity of actin cytoskeleton structures in neurons. Interacts (via C-terminal PDZ domain) with SLC26A6 (via C-terminal domain). Interacts (via C-terminal PDZ domain) with SLC9A3 (via C-terminal domain). Interacts (via the first PDZ domain) with PTGIR (via non-isoprenylated C-terminus). Interacts (via PDZ domains 1 and 3) with SLC5A8 (via PDZ-binding motif); interaction increases nicotinate transport activity of SLC5A8.

The protein localises to the membrane. The protein resides in the cell membrane. In terms of biological role, a scaffold protein that connects plasma membrane proteins and regulatory components, regulating their surface expression in epithelial cells apical domains. May be involved in the coordination of a diverse range of regulatory processes for ion transport and second messenger cascades. In complex with NHERF1, may cluster proteins that are functionally dependent in a mutual fashion and modulate the trafficking and the activity of the associated membrane proteins. May play a role in the cellular mechanisms associated with multidrug resistance through its interaction with ABCC2 and PDZK1IP1. May potentiate the CFTR chloride channel activity. Required for normal cell-surface expression of SCARB1. Plays a role in maintaining normal plasma cholesterol levels via its effects on SCARB1. Plays a role in the normal localization and function of the chloride-anion exchanger SLC26A6 to the plasma membrane in the brush border of the proximal tubule of the kidney. May be involved in the regulation of proximal tubular Na(+)-dependent inorganic phosphate cotransport therefore playing an important role in tubule function. The chain is Na(+)/H(+) exchange regulatory cofactor NHE-RF3 (PDZK1) from Pongo abelii (Sumatran orangutan).